The chain runs to 533 residues: Retinoid isomerohydrolase (533 aa).

N-acetylserine is present on S2. A phosphothreonine mark is found at T101 and T105. Residue C112 is the site of S-palmitoyl cysteine; in membrane form attachment. K113 is subject to N6-acetyllysine. A Phosphoserine modification is found at S117. H180 provides a ligand contact to Fe cation. Residue C231 is the site of S-palmitoyl cysteine; in membrane form attachment. Residues H241 and H313 each contribute to the Fe cation site. 2 S-palmitoyl cysteine; in membrane form lipidation sites follow: C329 and C330. H527 is a Fe cation binding site.

This sequence belongs to the carotenoid oxygenase family. In terms of assembly, interacts with MYO7A; this mediates light-dependent intracellular transport of RPE65. Fe(2+) is required as a cofactor. Post-translationally, palmitoylation by LRAT regulates ligand binding specificity; the palmitoylated form (membrane form) specifically binds all-trans-retinyl-palmitate, while the soluble unpalmitoylated form binds all-trans-retinol (vitamin A). In terms of tissue distribution, retinal pigment epithelium specific.

It is found in the cytoplasm. Its subcellular location is the cell membrane. It localises to the microsome membrane. The enzyme catalyses an all-trans-retinyl ester + H2O = 11-cis-retinol + a fatty acid + H(+). It catalyses the reaction lutein = (3R,3'S)-zeaxanthin. It carries out the reaction all-trans-retinyl hexadecanoate + H2O = 11-cis-retinol + hexadecanoate + H(+). Critical isomerohydrolase in the retinoid cycle involved in regeneration of 11-cis-retinal, the chromophore of rod and cone opsins. Catalyzes the cleavage and isomerization of all-trans-retinyl fatty acid esters to 11-cis-retinol which is further oxidized by 11-cis retinol dehydrogenase to 11-cis-retinal for use as visual chromophore. Essential for the production of 11-cis retinal for both rod and cone photoreceptors. Also capable of catalyzing the isomerization of lutein to meso-zeaxanthin an eye-specific carotenoid. The soluble form binds vitamin A (all-trans-retinol), making it available for LRAT processing to all-trans-retinyl ester. The membrane form, palmitoylated by LRAT, binds all-trans-retinyl esters, making them available for IMH (isomerohydrolase) processing to all-cis-retinol. The soluble form is regenerated by transferring its palmitoyl groups onto 11-cis-retinol, a reaction catalyzed by LRAT. The chain is Retinoid isomerohydrolase (RPE65) from Chlorocebus aethiops (Green monkey).